The chain runs to 103 residues: Small ribosomal subunit protein uS10 (103 aa).

Belongs to the universal ribosomal protein uS10 family. Part of the 30S ribosomal subunit.

Its function is as follows. Involved in the binding of tRNA to the ribosomes. This Neisseria meningitidis serogroup C / serotype 2a (strain ATCC 700532 / DSM 15464 / FAM18) protein is Small ribosomal subunit protein uS10.